Consider the following 257-residue polypeptide: Transmembrane protein C257L (257 aa).

2 consecutive transmembrane segments (helical) span residues 123-143 (LELLGYSPTPIIGGDFMFTAL) and 163-183 (MMIFFLIILLCVILGIFYVLV).

It belongs to the asfivirus C257R family.

The protein localises to the host membrane. It is found in the virion. In African swine fever virus (isolate Warthog/Namibia/Wart80/1980) (ASFV), this protein is Transmembrane protein C257L.